The following is a 452-amino-acid chain: Probable alpha-galactosidase B (452 aa).

The signal sequence occupies residues 1–24 (MLHRATTTAAAAAAAALLLCPVQA). Cysteines 47 and 79 form a disulfide. N-linked (GlcNAc...) asparagine glycans are attached at residues Asn87 and Asn138. A disulfide bridge links Cys129 with Cys159. The active-site Nucleophile is Asp157. Asn184 is a glycosylation site (N-linked (GlcNAc...) asparagine). 231–235 (DWGQA) contacts substrate. Asp253 serves as the catalytic Proton donor. N-linked (GlcNAc...) asparagine glycosylation is found at Asn292, Asn391, Asn409, and Asn410.

The protein belongs to the glycosyl hydrolase 27 family.

It localises to the secreted. It catalyses the reaction Hydrolysis of terminal, non-reducing alpha-D-galactose residues in alpha-D-galactosides, including galactose oligosaccharides, galactomannans and galactolipids.. In terms of biological role, hydrolyzes a variety of simple alpha-D-galactoside as well as more complex molecules such as oligosaccharides and polysaccharides. The protein is Probable alpha-galactosidase B of Talaromyces emersonii (Thermophilic fungus).